Consider the following 73-residue polypeptide: Small, acid-soluble spore protein C5 (73 aa).

It belongs to the alpha/beta-type SASP family.

SASP are bound to spore DNA. They are double-stranded DNA-binding proteins that cause DNA to change to an a-like conformation. They protect the DNA backbone from chemical and enzymatic cleavage and are thus involved in dormant spore's high resistance to UV light. In Priestia megaterium (Bacillus megaterium), this protein is Small, acid-soluble spore protein C5 (SASP-C5).